A 421-amino-acid chain; its full sequence is U-box domain-containing protein 26 (421 aa).

Residues 13–87 (QIPYHFRCPI…QEWCVANRSN (75 aa)) form the U-box domain.

It catalyses the reaction S-ubiquitinyl-[E2 ubiquitin-conjugating enzyme]-L-cysteine + [acceptor protein]-L-lysine = [E2 ubiquitin-conjugating enzyme]-L-cysteine + N(6)-ubiquitinyl-[acceptor protein]-L-lysine.. It participates in protein modification; protein ubiquitination. Its function is as follows. Functions as an E3 ubiquitin ligase. The chain is U-box domain-containing protein 26 (PUB26) from Arabidopsis thaliana (Mouse-ear cress).